The following is a 185-amino-acid chain: Dual-action ribosomal maturation protein DarP (185 aa).

It belongs to the DarP family.

The protein localises to the cytoplasm. Its function is as follows. Member of a network of 50S ribosomal subunit biogenesis factors which assembles along the 30S-50S interface, preventing incorrect 23S rRNA structures from forming. Promotes peptidyl transferase center (PTC) maturation. The polypeptide is Dual-action ribosomal maturation protein DarP (Vibrio vulnificus (strain YJ016)).